Consider the following 246-residue polypeptide: E3 ubiquitin-protein ligase MARCHF2 (246 aa).

The RING-CH-type zinc-finger motif lies at 56-116; that stretch reads GTQSDGPICR…ELCHTEFAVE (61 aa). Residues Cys64, Cys67, Cys80, Cys82, His90, Cys93, Cys106, and Cys109 each coordinate Zn(2+). 2 consecutive transmembrane segments (helical) span residues 138 to 158 and 175 to 195; these read LFCD…SGWL and AVGL…WTLV.

The protein resides in the endoplasmic reticulum membrane. Its subcellular location is the lysosome membrane. It is found in the endosome membrane. It catalyses the reaction S-ubiquitinyl-[E2 ubiquitin-conjugating enzyme]-L-cysteine + [acceptor protein]-L-lysine = [E2 ubiquitin-conjugating enzyme]-L-cysteine + N(6)-ubiquitinyl-[acceptor protein]-L-lysine.. The protein operates within protein modification; protein ubiquitination. In terms of biological role, E3 ubiquitin-protein ligase which may be involved in endosomal trafficking. E3 ubiquitin ligases accept ubiquitin from an E2 ubiquitin-conjugating enzyme in the form of a thioester and then directly transfer the ubiquitin to targeted substrates. The sequence is that of E3 ubiquitin-protein ligase MARCHF2 (marchf2) from Xenopus laevis (African clawed frog).